The following is a 383-amino-acid chain: MGAGGRTDVPPANRKSEVDPLKRVPFEKPQFSLSQIKKAIPPHCFQRSVLRSFSYVVYDLTIAFCLYYVATHYFHLLPGPLSFRGMAIYWAVQGCILTGVWVIAHECGHHAFSDYQLLDDIVGLILHSALLVPYFSWKYSHRRHHSNTGSLERDEVFVPKQKSCIKWYSKYLNNPPGRVLTLAVTLTLGWPLYLALNVSGRPYDRFACHYDPYGPIYSDRERLQIYISDAGVLAVVYGLFRLAMAKGLAWVVCVYGVPLLVVNGFLVLITFLQHTHPALPHYTSSEWDWLRGALATVDRDYGILNKVFHNITDTHVAHHLFSTMPHYHAMEATKAIKPILGEYYRFDETPFVKAMWREARECIYVEPDQSTESKGVFWYNNKL.

3 consecutive transmembrane segments (helical) span residues 61–81 (TIAFCLYYVATHYFHLLPGPL), 85–105 (GMAIYWAVQGCILTGVWVIAH), and 117–137 (LLDDIVGLILHSALLVPYFSW). The short motif at 105 to 109 (HECGH) is the Histidine box-1 element. A Histidine box-2 motif is present at residues 141–145 (HRRHH). 3 helical membrane passes run 179–199 (VLTLAVTLTLGWPLYLALNVS), 225–245 (IYISDAGVLAVVYGLFRLAMA), and 249–269 (AWVVCVYGVPLLVVNGFLVLI). A Histidine box-3 motif is present at residues 315 to 319 (HVAHH).

This sequence belongs to the fatty acid desaturase type 1 family.

It is found in the endoplasmic reticulum membrane. It functions in the pathway lipid metabolism; polyunsaturated fatty acid biosynthesis. Functionally, ER (microsomal) omega-6 fatty acid desaturase introduces the second double bond in the biosynthesis of 18:3 fatty acids, important constituents of plant membranes. It is thought to use cytochrome b5 as an electron donor and to act on fatty acids esterified to phosphatidylcholine and, possibly, other phospholipids. The protein is Omega-6 fatty acid desaturase, endoplasmic reticulum isozyme 2 (FAD2-2) of Glycine max (Soybean).